Here is a 590-residue protein sequence, read N- to C-terminus: DELLA protein GAI1 (590 aa).

Residues 1–10 (MKREYHHPHH) are compositionally biased toward basic residues. The tract at residues 1-28 (MKREYHHPHHPTCSTSPTGKGKMWDADP) is disordered. A DELLA motif motif is present at residues 35 to 39 (DELLA). Residues 153–182 (HIEQPPQQPPAPPLYQRDNKRLKPTTSATA) form a disordered region. Positions 205 to 575 (VDSQETGIRL…RPLIATSAWQ (371 aa)) constitute a GRAS domain. The interval 212-266 (IRLVHTLMACAEAVQQENLKLAEALVKQIGFLAVSQAGAMRKVATYFAEGLARRI) is leucine repeat I (LRI). The tract at residues 284-349 (QMHFYETCPY…GGPPSFRLTG (66 aa)) is VHIID. Positions 315-319 (VHVID) match the VHIID motif. A leucine repeat II (LRII) region spans residues 363–395 (EVGWKLAQLAETIHVEFEYRGFVANSLADLDAS). Residues 405 to 496 (VAVNSVFELH…EVYLGQQICN (92 aa)) are PFYRE. The LXXLL motif signature appears at 413-417 (LHSLL). The segment at 499–575 (ACEGPERVER…RPLIATSAWQ (77 aa)) is SAW.

It belongs to the GRAS family. DELLA subfamily. In terms of processing, phosphorylated. Post-translationally, ubiquitinated. Upon GA application it is ubiquitinated, leading to its subsequent degradation.

It localises to the nucleus. Functionally, probable transcriptional regulator that acts as a repressor of the gibberellin (GA) signaling pathway. Probably acts by participating in large multiprotein complexes that repress transcription of GA-inducible genes. Upon GA application, it is degraded by the proteasome, allowing the GA signaling pathway. The polypeptide is DELLA protein GAI1 (GAI1) (Vitis vinifera (Grape)).